The sequence spans 181 residues: Prepronociceptin (181 aa).

The first 19 residues, 1–19 (MKILFCDVLLLSLLSSVFS), serve as a signal peptide directing secretion. Residues 20–95 (SCPEDCLTCQ…QSKASEMQHL (76 aa)) constitute a propeptide that is removed on maturation. The tract at residues 103-125 (SVVQARDAEPEADAEPVADEADE) is disordered. 2 consecutive repeat copies span residues 109 to 114 (DAEPEA) and 115 to 120 (DAEPVA). The tract at residues 109–120 (DAEPEADAEPVA) is 2 X 6 AA tandem repeats of D-A-E-P-X-A. Residues 112-125 (PEADAEPVADEADE) show a composition bias toward acidic residues. Residues 174 to 181 (TLHQNGNV) constitute a propeptide that is removed on maturation.

It belongs to the opioid neuropeptide precursor family. In terms of processing, specific enzymatic cleavages at paired basic residues probably yield other active peptides besides nociceptin. Post-translationally, the N-terminal domain contains 6 conserved cysteines thought to be involved in disulfide bonding and/or processing. Expressed predominantly in the spinal cord and brain, being more abundant in the hypothalamus and striatum. Also found in small amounts in ovary.

The protein localises to the secreted. Its function is as follows. Ligand of the opioid receptor-like receptor OPRL1. It may act as a transmitter in the brain by modulating nociceptive and locomotor behavior. May be involved in neuronal differentiation and development. Blocks nociceptin action in pain transmission by inhibiting nociceptin-induced hyperalgesia and allodynia. In terms of biological role, has potent analgesic activity. The polypeptide is Prepronociceptin (Pnoc) (Rattus norvegicus (Rat)).